The primary structure comprises 449 residues: uncharacterized protein (449 aa).

2 disordered regions span residues 1 to 58 and 71 to 125; these read MVKR…SLSS and EALE…VVEL. Positions 30-46 are enriched in basic and acidic residues; the sequence is KQRDELREKQKRKREDS. A compositionally biased stretch (acidic residues) spans 103–124; the sequence is SDDDDDDNEEEDDNGFEDQVVE.

The protein belongs to the bystin family.

This is an uncharacterized protein from Caenorhabditis elegans.